The primary structure comprises 464 residues: Glutamate--tRNA ligase 1 (464 aa).

Residues proline 8 to glycine 18 carry the 'HIGH' region motif. The short motif at proline 231–arginine 235 is the 'KMSKS' region element. An ATP-binding site is contributed by lysine 234.

It belongs to the class-I aminoacyl-tRNA synthetase family. Glutamate--tRNA ligase type 1 subfamily. In terms of assembly, monomer.

The protein resides in the cytoplasm. It catalyses the reaction tRNA(Glu) + L-glutamate + ATP = L-glutamyl-tRNA(Glu) + AMP + diphosphate. Functionally, catalyzes the attachment of glutamate to tRNA(Glu) in a two-step reaction: glutamate is first activated by ATP to form Glu-AMP and then transferred to the acceptor end of tRNA(Glu). This Thermotoga sp. (strain RQ2) protein is Glutamate--tRNA ligase 1.